Consider the following 706-residue polypeptide: Gamma-adducin (706 aa).

A compositionally biased stretch (low complexity) spans 1-11; sequence MSSDTSPAVVT. Positions 1–23 are disordered; that stretch reads MSSDTSPAVVTTPPPPSMPHKER. Ser2 is modified (N-acetylserine). 8 positions are modified to phosphoserine: Ser31, Ser42, Ser64, Ser402, Ser414, Ser423, Ser442, and Ser461. Disordered stretches follow at residues 471–495, 534–556, 574–610, and 651–706; these read AEDSSKVSSGTPIKIEDPNQFVPLN, PPSTMQFDDDDQGPPAPPNPFSH, QGLDDAEQGSLSDDAASVSQIQSQTQSPQSVPERLEE, and TSTT…KVEA. Residue Lys484 forms a Glycyl lysine isopeptide (Lys-Gly) (interchain with G-Cter in SUMO2) linkage. Phosphoserine occurs at positions 583, 585, and 590. Low complexity-rich tracts occupy residues 590–605 and 651–662; these read SVSQIQSQTQSPQSVP and TSTTIENIEITI. Phosphoserine is present on residues Ser673, Ser677, Ser679, Ser681, and Ser683. The span at 682 to 706 shows a compositional bias: basic residues; the sequence is PSKKKKKFRTPSFLKKNKKKEKVEA. Residues 684–701 form an interaction with calmodulin region; that stretch reads KKKKKFRTPSFLKKNKKK.

Belongs to the aldolase class II family. Adducin subfamily. In terms of assembly, heterodimer of an alpha and a gamma subunit. In terms of processing, sumoylated. Proteolytically cleaved by asparagine endopeptidase (AEP) into 2 fragments. Overexpression of the 1-357 fragment induces neuronal apoptosis, and overexpression of either 1-357 or 358-706 fragment increases the degeneration of dendritic spines. Overexpression of the 1-357 fragment impairs neurite outgrowth by downregulating the expression of Rac2, and induces synaptic dysfunction and cognitive impairments in tau P301S transgenic mice, a mouse model for Alzheimer disease (AD). In terms of tissue distribution, cleavage fragment 1-357 is expressed in the brain and the expression increases with age (at protein level). The fragment is expressed in the cortex, hippocampal CA1 region and hippocampal dentate gyrus in tau P301S transgenic mice, a mouse model for Alzheimer disease (AD) (at protein level). The fragment is only weakly expressed in non-transgenic mouse brain sections (at protein level).

Its subcellular location is the cytoplasm. It is found in the cytoskeleton. The protein resides in the cell membrane. Membrane-cytoskeleton-associated protein that promotes the assembly of the spectrin-actin network. Plays a role in actin filament capping. Binds to calmodulin. Involved in myogenic reactivity of the renal afferent arteriole (Af-art), renal interlobular arteries and middle cerebral artery (MCA) to increased perfusion pressure. Involved in regulation of potassium channels in the vascular smooth muscle cells (VSMCs) of the Af-art and MCA ex vivo. Involved in regulation of glomerular capillary pressure, glomerular filtration rate (GFR) and glomerular nephrin expression in response to hypertension. Involved in renal blood flow (RBF) autoregulation. Plays a role in podocyte structure and function. Regulates globular monomer actin (G-actin) and filamentous polymer actin (F-actin) ratios in the primary podocytes affecting actin cytoskeleton organization. Regulates expression of synaptopodin, RhoA, Rac1 and CDC42 in the renal cortex and the primary podocytes. Regulates expression of nephrin in the glomeruli and in the primary podocytes, expression of nephrin and podocinin in the renal cortex, and expression of focal adhesion proteins integrin alpha-3 and integrin beta-1 in the glomeruli. Involved in cell migration and cell adhesion of podocytes, and in podocyte foot process effacement. Regulates expression of profibrotics markers MMP2, MMP9, TGF beta-1, tubular tight junction protein E-cadherin, and mesenchymal markers vimentin and alpha-SMA. Promotes the growth of neurites. The protein is Gamma-adducin (Add3) of Mus musculus (Mouse).